A 74-amino-acid chain; its full sequence is uncharacterized protein (74 aa).

This is an uncharacterized protein from Dictyostelium discoideum (Social amoeba).